The sequence spans 130 residues: Cuticle protein 14 isoform a (130 aa).

The region spanning 24–90 (IGNYNFGYNE…NVHTNEPGTD (67 aa)) is the Chitin-binding type R&amp;R domain.

The chain is Cuticle protein 14 isoform a from Limulus polyphemus (Atlantic horseshoe crab).